The following is a 155-amino-acid chain: Ribosomal RNA large subunit methyltransferase H (155 aa).

S-adenosyl-L-methionine is bound by residues leucine 72, glycine 103, and leucine 122–leucine 127.

This sequence belongs to the RNA methyltransferase RlmH family. Homodimer.

It is found in the cytoplasm. The catalysed reaction is pseudouridine(1915) in 23S rRNA + S-adenosyl-L-methionine = N(3)-methylpseudouridine(1915) in 23S rRNA + S-adenosyl-L-homocysteine + H(+). Specifically methylates the pseudouridine at position 1915 (m3Psi1915) in 23S rRNA. The sequence is that of Ribosomal RNA large subunit methyltransferase H from Variovorax paradoxus (strain S110).